Reading from the N-terminus, the 180-residue chain is NAD(P)H-quinone oxidoreductase subunit I, chloroplastic (180 aa).

4Fe-4S ferredoxin-type domains are found at residues 55-84 (GRIH…VDWR) and 95-124 (LNYS…MTEE). Positions 64, 67, 70, 74, 104, 107, 110, and 114 each coordinate [4Fe-4S] cluster.

This sequence belongs to the complex I 23 kDa subunit family. In terms of assembly, NDH is composed of at least 16 different subunits, 5 of which are encoded in the nucleus. [4Fe-4S] cluster serves as cofactor.

The protein localises to the plastid. The protein resides in the chloroplast thylakoid membrane. It carries out the reaction a plastoquinone + NADH + (n+1) H(+)(in) = a plastoquinol + NAD(+) + n H(+)(out). The catalysed reaction is a plastoquinone + NADPH + (n+1) H(+)(in) = a plastoquinol + NADP(+) + n H(+)(out). In terms of biological role, NDH shuttles electrons from NAD(P)H:plastoquinone, via FMN and iron-sulfur (Fe-S) centers, to quinones in the photosynthetic chain and possibly in a chloroplast respiratory chain. The immediate electron acceptor for the enzyme in this species is believed to be plastoquinone. Couples the redox reaction to proton translocation, and thus conserves the redox energy in a proton gradient. The polypeptide is NAD(P)H-quinone oxidoreductase subunit I, chloroplastic (Oryza nivara (Indian wild rice)).